The following is a 69-amino-acid chain: Large ribosomal subunit protein eL38 (69 aa).

This sequence belongs to the eukaryotic ribosomal protein eL38 family.

In Solanum lycopersicum (Tomato), this protein is Large ribosomal subunit protein eL38 (RPL38).